An 834-amino-acid chain; its full sequence is Taste receptor type 1 member 2 (834 aa).

The signal sequence occupies residues 1-19 (MGPRARTVCFLFFLLWVLA). Residues 20 to 561 (ELAENSDFHL…SFLEWHEAAT (542 aa)) are Extracellular-facing. Residues Asn84, Asn292, Asn312, Asn363, Asn423, Asn482, and Asn522 are each glycosylated (N-linked (GlcNAc...) asparagine). Residues 562–582 (IAVALLAALGFLXXXXXXXXX) form a helical membrane-spanning segment. At 583 to 597 (XXXXXXPMVRSAGGP) the chain is on the cytoplasmic side. Residues 598 to 618 (MCFLMLTLLLVAYMVVPVYVG) form a helical membrane-spanning segment. Over 619-630 (PPKVTTCLCRQA) the chain is Extracellular. The helical transmembrane segment at 631–651 (LFPVCFTICISCITMRSFQIV) threads the bilayer. Residues 652-676 (CVFKMASRFPRAYSYWVRYQGSYVS) are Cytoplasmic-facing. A helical transmembrane segment spans residues 677-697 (VAFITALKVVTVVISLLATGL). Topologically, residues 698–722 (NPTTRADTDDPKIMIISCNPNYRNS) are extracellular. A helical membrane pass occupies residues 723–743 (LLFNTSLDLLLSVVGFSFAYM). The Cytoplasmic segment spans residues 744 to 755 (GKELPTNYNEAK). Residues 756 to 776 (FITFSMTFYFTSSVSLCTFMS) traverse the membrane as a helical segment. Over 777-779 (VYD) the chain is Extracellular. A helical membrane pass occupies residues 780–800 (GVLVTIVDLLVTVFNLLAISL). Residues 801–834 (GYFGPKCYMILFYPERNTPAYFNSMIQGYTMRRD) are Cytoplasmic-facing.

The protein belongs to the G-protein coupled receptor 3 family. TAS1R subfamily. As to quaternary structure, forms heterodimers with TAS1R3.

The protein localises to the cell membrane. Its function is as follows. Putative taste receptor. TAS1R2/TAS1R3 recognizes diverse natural and synthetic sweeteners. The chain is Taste receptor type 1 member 2 (TAS1R2) from Cebuella pygmaea (Pygmy marmoset).